We begin with the raw amino-acid sequence, 328 residues long: Carbonic anhydrase, chloroplastic (328 aa).

Over residues 1-15 (MSTSSINGFSLSSLS) the composition is skewed to low complexity. The segment at 1 to 26 (MSTSSINGFSLSSLSPAKTSTKRTTL) is disordered. Residues 1 to 70 (MSTSSINGFS…IITPVLREEM (70 aa)) constitute a chloroplast transit peptide.

It belongs to the beta-class carbonic anhydrase family. In terms of assembly, homohexamer.

It is found in the plastid. It localises to the chloroplast stroma. It carries out the reaction hydrogencarbonate + H(+) = CO2 + H2O. Functionally, reversible hydration of carbon dioxide. This chain is Carbonic anhydrase, chloroplastic, found in Pisum sativum (Garden pea).